The following is a 227-amino-acid chain: 2,3-bisphosphoglycerate-dependent phosphoglycerate mutase (227 aa).

Substrate-binding positions include 7–14, 20–21, R59, 86–89, K97, 113–114, and 182–183; these read RHGFSEWN, TG, ERHY, RR, and GN. The active-site Tele-phosphohistidine intermediate is H8. E86 functions as the Proton donor/acceptor in the catalytic mechanism.

The protein belongs to the phosphoglycerate mutase family. BPG-dependent PGAM subfamily. In terms of assembly, homodimer.

It catalyses the reaction (2R)-2-phosphoglycerate = (2R)-3-phosphoglycerate. Its pathway is carbohydrate degradation; glycolysis; pyruvate from D-glyceraldehyde 3-phosphate: step 3/5. Functionally, catalyzes the interconversion of 2-phosphoglycerate and 3-phosphoglycerate. The sequence is that of 2,3-bisphosphoglycerate-dependent phosphoglycerate mutase from Haemophilus influenzae (strain 86-028NP).